The chain runs to 212 residues: Imidazole glycerol phosphate synthase subunit HisH (212 aa).

Positions 3–212 (TVAVIDYGMG…QNFAAWDGRW (210 aa)) constitute a Glutamine amidotransferase type-1 domain. Residue cysteine 81 is the Nucleophile of the active site. Residues histidine 190 and glutamate 192 contribute to the active site.

As to quaternary structure, heterodimer of HisH and HisF.

The protein resides in the cytoplasm. The catalysed reaction is 5-[(5-phospho-1-deoxy-D-ribulos-1-ylimino)methylamino]-1-(5-phospho-beta-D-ribosyl)imidazole-4-carboxamide + L-glutamine = D-erythro-1-(imidazol-4-yl)glycerol 3-phosphate + 5-amino-1-(5-phospho-beta-D-ribosyl)imidazole-4-carboxamide + L-glutamate + H(+). It carries out the reaction L-glutamine + H2O = L-glutamate + NH4(+). Its pathway is amino-acid biosynthesis; L-histidine biosynthesis; L-histidine from 5-phospho-alpha-D-ribose 1-diphosphate: step 5/9. Its function is as follows. IGPS catalyzes the conversion of PRFAR and glutamine to IGP, AICAR and glutamate. The HisH subunit catalyzes the hydrolysis of glutamine to glutamate and ammonia as part of the synthesis of IGP and AICAR. The resulting ammonia molecule is channeled to the active site of HisF. The polypeptide is Imidazole glycerol phosphate synthase subunit HisH (Pseudomonas syringae pv. syringae (strain B728a)).